Here is a 344-residue protein sequence, read N- to C-terminus: Protein RecA (344 aa).

ATP is bound at residue 65 to 72 (GPESSGKT).

The protein belongs to the RecA family.

It is found in the cytoplasm. Functionally, can catalyze the hydrolysis of ATP in the presence of single-stranded DNA, the ATP-dependent uptake of single-stranded DNA by duplex DNA, and the ATP-dependent hybridization of homologous single-stranded DNAs. It interacts with LexA causing its activation and leading to its autocatalytic cleavage. This is Protein RecA from Rubrobacter xylanophilus (strain DSM 9941 / JCM 11954 / NBRC 16129 / PRD-1).